Consider the following 279-residue polypeptide: Thymidylate synthase (279 aa).

A dUMP-binding site is contributed by Arg29. His59 provides a ligand contact to (6R)-5,10-methylene-5,6,7,8-tetrahydrofolate. Position 134–135 (134–135 (RR)) interacts with dUMP. Cys154 functions as the Nucleophile in the catalytic mechanism. DUMP-binding positions include 181–184 (RSAD), Asn192, and 222–224 (HIY). Asp184 is a binding site for (6R)-5,10-methylene-5,6,7,8-tetrahydrofolate. Ala278 serves as a coordination point for (6R)-5,10-methylene-5,6,7,8-tetrahydrofolate.

Belongs to the thymidylate synthase family. Bacterial-type ThyA subfamily. In terms of assembly, homodimer.

The protein localises to the cytoplasm. The catalysed reaction is dUMP + (6R)-5,10-methylene-5,6,7,8-tetrahydrofolate = 7,8-dihydrofolate + dTMP. The protein operates within pyrimidine metabolism; dTTP biosynthesis. Functionally, catalyzes the reductive methylation of 2'-deoxyuridine-5'-monophosphate (dUMP) to 2'-deoxythymidine-5'-monophosphate (dTMP) while utilizing 5,10-methylenetetrahydrofolate (mTHF) as the methyl donor and reductant in the reaction, yielding dihydrofolate (DHF) as a by-product. This enzymatic reaction provides an intracellular de novo source of dTMP, an essential precursor for DNA biosynthesis. This is Thymidylate synthase from Paracidovorax citrulli (strain AAC00-1) (Acidovorax citrulli).